A 238-amino-acid polypeptide reads, in one-letter code: MGRKWANIVAKKTAKDGANSKVYAKFGVEIYVAAKQGEPDPESNSALKFVLERAKQAQVPKHVIDKAIDKAKGNTDETFVEGRYEGFGPNGSMIIVDTLTSNVNRTAANLRTAFGKNGGNMGAAGSVSYMFDKKGVIVFAGDDADSIFEQLLEADIDVEDVEAEDGSVTVYTAPTDLHRGIEALRAGGVAEFQVTELEMIPQSEVTLEGEDLETFEKLIDALEDDDDVQKVYHNVDGL.

Belongs to the TACO1 family. YeeN subfamily.

It is found in the cytoplasm. In Streptococcus mutans serotype c (strain ATCC 700610 / UA159), this protein is Probable transcriptional regulatory protein SMU_1789c.